Here is a 185-residue protein sequence, read N- to C-terminus: Deoxyuridine 5'-triphosphate nucleotidohydrolase (185 aa).

The interval 1-23 is disordered; it reads MSHLQAHMQRNNKESHSLSPFSQ. Substrate is bound by residues 95–97, asparagine 108, 112–114, and lysine 122; these read RSG and TID. A disordered region spans residues 160 to 185; the sequence is DQKDSSQTPSNEGSRGADGFGSTGHD. Over residues 175-185 the composition is skewed to gly residues; that stretch reads GADGFGSTGHD.

The protein belongs to the dUTPase family. Mg(2+) is required as a cofactor.

The catalysed reaction is dUTP + H2O = dUMP + diphosphate + H(+). It participates in pyrimidine metabolism; dUMP biosynthesis; dUMP from dCTP (dUTP route): step 2/2. Its function is as follows. This enzyme is involved in nucleotide metabolism: it produces dUMP, the immediate precursor of thymidine nucleotides and it decreases the intracellular concentration of dUTP so that uracil cannot be incorporated into DNA. This chain is Deoxyuridine 5'-triphosphate nucleotidohydrolase, found in Bartonella quintana (strain Toulouse) (Rochalimaea quintana).